Reading from the N-terminus, the 199-residue chain is Probable GTP-binding protein EngB (199 aa).

One can recognise an EngB-type G domain in the interval 22–196; sequence NWPEFAFSGR…GKFILDLVDS (175 aa). GTP is bound by residues 30-37, 57-61, 75-78, 142-145, and 175-177; these read GRSNVGKS, GRTQS, DLPG, TKVD, and FSA. Mg(2+) is bound by residues S37 and T59.

Belongs to the TRAFAC class TrmE-Era-EngA-EngB-Septin-like GTPase superfamily. EngB GTPase family. Requires Mg(2+) as cofactor.

Necessary for normal cell division and for the maintenance of normal septation. The protein is Probable GTP-binding protein EngB of Halothermothrix orenii (strain H 168 / OCM 544 / DSM 9562).